Here is a 179-residue protein sequence, read N- to C-terminus: Large ribosomal subunit protein uL16 (179 aa).

The interval 147 to 179 is disordered; it reads KASSASLANLDEDANSQTDDETSSSGSVATVES. A compositionally biased stretch (acidic residues) spans 156–168; it reads LDEDANSQTDDET. Polar residues predominate over residues 169–179; the sequence is SSSGSVATVES.

It belongs to the universal ribosomal protein uL16 family. As to quaternary structure, part of the 50S ribosomal subunit.

In terms of biological role, binds 23S rRNA and is also seen to make contacts with the A and possibly P site tRNAs. The protein is Large ribosomal subunit protein uL16 of Prochlorococcus marinus (strain MIT 9211).